The chain runs to 238 residues: uncharacterized protein (238 aa).

Residues 1-20 (MPNLHSLPLGTRPENAIRNN) form a disordered region.

The protein belongs to the PEP2 family.

This is an uncharacterized protein from Emericella nidulans (strain FGSC A4 / ATCC 38163 / CBS 112.46 / NRRL 194 / M139) (Aspergillus nidulans).